The following is a 75-amino-acid chain: Small ribosomal subunit protein bS18 (75 aa).

The segment covering 1-11 (MAAKPFFRRRK) has biased composition (basic residues). A disordered region spans residues 1 to 21 (MAAKPFFRRRKTDPFEGENAP).

The protein belongs to the bacterial ribosomal protein bS18 family. As to quaternary structure, part of the 30S ribosomal subunit. Forms a tight heterodimer with protein bS6.

Binds as a heterodimer with protein bS6 to the central domain of the 16S rRNA, where it helps stabilize the platform of the 30S subunit. The protein is Small ribosomal subunit protein bS18 of Jannaschia sp. (strain CCS1).